A 64-amino-acid chain; its full sequence is Temporin-ALg (64 aa).

The first 22 residues, 1–22 (MFTLKKSLLLLFFLGTINLSLC), serve as a signal peptide directing secretion. A propeptide spanning residues 23–46 (EQERNAEEERRDDLGERQAEVEKR) is cleaved from the precursor. L62 carries the leucine amide modification.

Belongs to the frog skin active peptide (FSAP) family. Temporin subfamily. In terms of tissue distribution, expressed by the skin glands.

It is found in the secreted. In terms of biological role, antimicrobial peptide with activity against Gram-positive and Gram-negative bacteria and against fungi. Has been tested against S.aureus (MIC=2.5 ug/mL), B.pumilus (MIC=2.5 ug/mL), B.cereus (MIC=30.0 ug/mL), E.coli (MIC=5.0 ug/mL), B.dysenteriae (MIC=10.0 ug/mL), A.cacoaceticus (MIC=30.0 ug/mL), P.aeruginosa (MIC=7.5 ug/mL) and C.albicans (MIC=1.25 ug/mL). Also shows a weak hemolytic activity. In Amolops loloensis (Lolokou Sucker Frog), this protein is Temporin-ALg.